Consider the following 359-residue polypeptide: RuBisCO accumulation factor 1 (359 aa).

The interval 12–195 (LSPEETDALF…RQKIEQLLSD (184 aa)) is N-terminal alpha-helix. The tract at residues 219-345 (PLLIPVAGSL…VLLVMRPKKI (127 aa)) is C-terminal beta-sheet.

The protein belongs to the RAF family. In terms of assembly, homodimer. Forms an RbcL(8)-Raf1(8) complex. Forms complexes of many stoichiometries with RbcL with and without RbcS. RbcX and Raf1 can bind simultaneously to RbcL.

The protein resides in the cytoplasm. Functionally, a major RuBisCO chaperone. Acts after GroEL-GroES chaperonin to fold and/or assemble the large subunit of RuBisCO (ccbL, rbcL). Cooperates with RbcX in RbcL folding, plays the major role in assembly of dimers into RbcL(8)-Raf1(8) intermediate complexes. RbcS replaces Raf1, leading to holoenzyme formation. In terms of biological role, raf1 and RbcX are probably functionally redundant; it has been suggested they may cooperate. The chain is RuBisCO accumulation factor 1 from Picosynechococcus sp. (strain ATCC 27264 / PCC 7002 / PR-6) (Agmenellum quadruplicatum).